A 168-amino-acid chain; its full sequence is Group IIF secretory phospholipase A2 (168 aa).

The signal sequence occupies residues methionine 1–glycine 20. 7 disulfide bridges follow: cysteine 46–cysteine 138, cysteine 48–cysteine 64, cysteine 63–cysteine 120, cysteine 69–cysteine 145, cysteine 70–cysteine 113, cysteine 79–cysteine 106, and cysteine 98–cysteine 111. Residues tyrosine 47, glycine 49, and glycine 51 each coordinate Ca(2+). Histidine 67 is an active-site residue. Aspartate 68 provides a ligand contact to Ca(2+). N-linked (GlcNAc...) asparagine glycans are attached at residues asparagine 92 and asparagine 102. Aspartate 114 is a catalytic residue. Residues asparagine 123 and asparagine 144 are each glycosylated (N-linked (GlcNAc...) asparagine). The segment at glutamine 139–proline 168 is required for localization on the plasma membrane.

It belongs to the phospholipase A2 family. Ca(2+) is required as a cofactor. In terms of tissue distribution, expressed at high levels in placenta, testis, thymus and at lower levels in heart, kidney, liver and prostate. Highly expressed in rheumatoid arthritic tissues, including synovial lining cells in the intima, capillary endothelial cells and plasma cells.

The protein localises to the secreted. The protein resides in the cell membrane. It catalyses the reaction a 1,2-diacyl-sn-glycero-3-phosphocholine + H2O = a 1-acyl-sn-glycero-3-phosphocholine + a fatty acid + H(+). It carries out the reaction 1-hexadecanoyl-2-(9Z-octadecenoyl)-sn-glycero-3-phospho-(1'-sn-glycerol) + H2O = 1-hexadecanoyl-sn-glycero-3-phospho-(1'-sn-glycerol) + (9Z)-octadecenoate + H(+). The catalysed reaction is 1-hexadecanoyl-2-(9Z,12Z-octadecadienoyl)-sn-glycero-3-phosphoethanolamine + H2O = 1-hexadecanoyl-sn-glycero-3-phosphoethanolamine + (9Z,12Z)-octadecadienoate + H(+). The enzyme catalyses 1-hexadecanoyl-2-(5Z,8Z,11Z,14Z-eicosatetraenoyl)-sn-glycero-3-phosphoethanolamine + H2O = 1-hexadecanoyl-sn-glycero-3-phosphoethanolamine + (5Z,8Z,11Z,14Z)-eicosatetraenoate + H(+). It catalyses the reaction 1-hexadecanoyl-2-(9Z-octadecenoyl)-sn-glycero-3-phosphocholine + H2O = 1-hexadecanoyl-sn-glycero-3-phosphocholine + (9Z)-octadecenoate + H(+). It carries out the reaction 1-hexadecanoyl-2-(9Z-octadecenoyl)-sn-glycero-3-phospho-L-serine + H2O = 1-hexadecanoyl-sn-glycero-3-phospho-L-serine + (9Z)-octadecenoate + H(+). In terms of biological role, secretory calcium-dependent phospholipase A2 that primarily targets extracellular phospholipids. Hydrolyzes the ester bond of the fatty acyl group attached at the sn-2 position of phospholipids (phospholipase A2 activity), the catalytic efficiency decreasing in the following order: phosphatidylglycerols &gt; phosphatidylethanolamines &gt; phosphatidylcholines &gt; phosphatidylserines. May play a role in lipid mediator production in inflammatory conditions, by providing arachidonic acid to downstream cyclooxygenases and lipoxygenases. The chain is Group IIF secretory phospholipase A2 (PLA2G2F) from Homo sapiens (Human).